The following is a 375-amino-acid chain: Vasculin (375 aa).

Disordered stretches follow at residues 49–109 (SSDA…TSEI) and 356–375 (DSVQKEDSETSSSSDTSDDE). Residues 96–108 (MKSQLHSENNTSE) show a composition bias toward polar residues. Positions 365-375 (TSSSSDTSDDE) are enriched in low complexity.

Belongs to the vasculin family.

The protein localises to the nucleus. Functionally, functions as a GC-rich promoter-specific transactivating transcription factor. The chain is Vasculin (gpbp1) from Xenopus tropicalis (Western clawed frog).